Reading from the N-terminus, the 162-residue chain is NADH-quinone oxidoreductase subunit I (162 aa).

4Fe-4S ferredoxin-type domains are found at residues 53–83 (LRRY…IEAE) and 93–122 (TRYD…EGPN). Positions 63, 66, 69, 73, 102, 105, 108, and 112 each coordinate [4Fe-4S] cluster.

Belongs to the complex I 23 kDa subunit family. As to quaternary structure, NDH-1 is composed of 14 different subunits. Subunits NuoA, H, J, K, L, M, N constitute the membrane sector of the complex. Requires [4Fe-4S] cluster as cofactor.

Its subcellular location is the cell inner membrane. It catalyses the reaction a quinone + NADH + 5 H(+)(in) = a quinol + NAD(+) + 4 H(+)(out). NDH-1 shuttles electrons from NADH, via FMN and iron-sulfur (Fe-S) centers, to quinones in the respiratory chain. The immediate electron acceptor for the enzyme in this species is believed to be ubiquinone. Couples the redox reaction to proton translocation (for every two electrons transferred, four hydrogen ions are translocated across the cytoplasmic membrane), and thus conserves the redox energy in a proton gradient. This is NADH-quinone oxidoreductase subunit I from Rhodospirillum rubrum (strain ATCC 11170 / ATH 1.1.1 / DSM 467 / LMG 4362 / NCIMB 8255 / S1).